A 563-amino-acid chain; its full sequence is Autotransporter BimA (563 aa).

Residues 1 to 20 (MKYRRLSLAHARQDSGQAAS) are disordered. Positions 1–48 (MKYRRLSLAHARQDSGQAASNARSRRFARLLCSSIAPLALGFSADAFA) are cleaved as a signal peptide. The surface exposed passenger domain stretch occupies residues 61-472 (APNDAHGNLL…NLAISNSNAY (412 aa)). The WH2 domain maps to 65–82 (AHGNLLDEIRRGVPLRHV). The segment at 96 to 130 (TLADAMRRVIDSRRTAFDSPPATPASPSPSWSDDE) is central and acidic domains. A disordered region spans residues 109 to 350 (RTAFDSPPAT…PARPGGGQFT (242 aa)). Composition is skewed to low complexity over residues 138-150 (ATRP…SAAR), 162-197 (PASA…STPR), and 211-227 (SPAA…AHSR). Composition is skewed to polar residues over residues 228-238 (GSTQPPSNLST) and 269-281 (SRGS…NLST). Positions 473-509 (TNQRIGDLQQSITETARDAYSGVAAATALTMIPDVDR) are outer membrane translocation of the passenger domain. A run of 4 beta stranded transmembrane segments spans residues 510 to 519 (DKMLSIGVGG), 525 to 536 (HRAVALGGTARI), 543 to 549 (RAGVAMS), and 553 to 563 (NTVGVGMSWQW). The segment at 510 to 563 (DKMLSIGVGGAVYKGHRAVALGGTARIGENLKVRAGVAMSAGGNTVGVGMSWQW) is translocator domain.

It belongs to the autotransporter-2 (AT-2) (TC 1.B.40) family. As to quaternary structure, homotrimer. Interacts with host G-actin; the interaction is direct. Interacts (via central and acidic domains) with host ACTR2/ARP2 and ACTR3/ARP3.

Its subcellular location is the cell outer membrane. The protein localises to the cell surface. In terms of biological role, during host cell infection, required for actin-based intracellular motility. Mediates actin tail formation at one pole of the bacteria surface by recruiting host Arp2/3 (ACTR3/ARP3-ACTR2/ARP2) which leads to actin polymerization which provides the propulsive force for intracellular movement and intercellular dissemination of the bacterium. This Burkholderia thailandensis (strain ATCC 700388 / DSM 13276 / CCUG 48851 / CIP 106301 / E264) protein is Autotransporter BimA.